Reading from the N-terminus, the 999-residue chain is Disks large-associated protein 1 (999 aa).

Disordered regions lie at residues 155–213 (HSLE…GYWS), 395–418 (MAED…ARRA), and 918–989 (NWRP…DSIE). Over residues 194 to 204 (RERCKSAEPKN) the composition is skewed to basic and acidic residues. Composition is skewed to basic and acidic residues over residues 923 to 932 (DPPERKERRL) and 947 to 965 (LARD…EARK). Positions 976 to 985 (VRQNSATESA) are enriched in polar residues. A PDZ-binding motif is present at residues 997 to 999 (TRL).

This sequence belongs to the SAPAP family.

The protein localises to the cell membrane. It is found in the postsynaptic density. Its subcellular location is the synapse. Part of the postsynaptic scaffold in neuronal cells. This Danio rerio (Zebrafish) protein is Disks large-associated protein 1.